Consider the following 154-residue polypeptide: NADPH-dependent 7-cyano-7-deazaguanine reductase (154 aa).

Residues 1–21 (MPNTDVSSLSMLGHQTETASS) are compositionally biased toward polar residues. The disordered stretch occupies residues 1–26 (MPNTDVSSLSMLGHQTETASSPEEAV). Cys-52 acts as the Thioimide intermediate in catalysis. Residue Asp-59 is the Proton donor of the active site. Residues 74-76 (VES) and 93-94 (HE) contribute to the substrate site.

Belongs to the GTP cyclohydrolase I family. QueF type 1 subfamily.

It is found in the cytoplasm. It catalyses the reaction 7-aminomethyl-7-carbaguanine + 2 NADP(+) = 7-cyano-7-deazaguanine + 2 NADPH + 3 H(+). Its pathway is tRNA modification; tRNA-queuosine biosynthesis. Catalyzes the NADPH-dependent reduction of 7-cyano-7-deazaguanine (preQ0) to 7-aminomethyl-7-deazaguanine (preQ1). The protein is NADPH-dependent 7-cyano-7-deazaguanine reductase of Rhizobium etli (strain ATCC 51251 / DSM 11541 / JCM 21823 / NBRC 15573 / CFN 42).